The following is a 70-amino-acid chain: Protein SlyX homolog (70 aa).

It belongs to the SlyX family.

The protein is Protein SlyX homolog of Pseudoalteromonas atlantica (strain T6c / ATCC BAA-1087).